We begin with the raw amino-acid sequence, 288 residues long: Probable anion import ATP-binding protein HVO_1886 (288 aa).

Over residues 1–18 (MTTERPDAGDSGSEKPDE) the composition is skewed to basic and acidic residues. Residues 1–33 (MTTERPDAGDSGSEKPDETAAPDPAANGARRSK) form a disordered region. The ABC transporter domain maps to 36 to 282 (LAARSLGHGF…PDDDRVRQFV (247 aa)). Residue 68-75 (GPSGTGKT) coordinates ATP.

The protein belongs to the ABC transporter superfamily. As to quaternary structure, the complex is composed of two ATP-binding proteins (HVO_1886), two transmembrane proteins (HVO_1887) and a solute-binding protein (HVO_1888).

Its subcellular location is the cell membrane. In terms of biological role, part of an ABC transporter complex involved in anions import. Responsible for energy coupling to the transport system. This is Probable anion import ATP-binding protein HVO_1886 from Haloferax volcanii (strain ATCC 29605 / DSM 3757 / JCM 8879 / NBRC 14742 / NCIMB 2012 / VKM B-1768 / DS2) (Halobacterium volcanii).